The sequence spans 498 residues: ATP synthase subunit beta, chloroplastic (498 aa).

Residue 172 to 179 participates in ATP binding; it reads GGAGVGKT.

This sequence belongs to the ATPase alpha/beta chains family. As to quaternary structure, F-type ATPases have 2 components, CF(1) - the catalytic core - and CF(0) - the membrane proton channel. CF(1) has five subunits: alpha(3), beta(3), gamma(1), delta(1), epsilon(1). CF(0) has four main subunits: a(1), b(1), b'(1) and c(9-12).

It localises to the plastid. The protein localises to the chloroplast thylakoid membrane. It carries out the reaction ATP + H2O + 4 H(+)(in) = ADP + phosphate + 5 H(+)(out). Functionally, produces ATP from ADP in the presence of a proton gradient across the membrane. The catalytic sites are hosted primarily by the beta subunits. The protein is ATP synthase subunit beta, chloroplastic of Lolium perenne (Perennial ryegrass).